The chain runs to 336 residues: Aspartate--ammonia ligase (336 aa).

Belongs to the class-II aminoacyl-tRNA synthetase family. AsnA subfamily.

The protein localises to the cytoplasm. The catalysed reaction is L-aspartate + NH4(+) + ATP = L-asparagine + AMP + diphosphate + H(+). It participates in amino-acid biosynthesis; L-asparagine biosynthesis; L-asparagine from L-aspartate (ammonia route): step 1/1. This Ruminiclostridium cellulolyticum (strain ATCC 35319 / DSM 5812 / JCM 6584 / H10) (Clostridium cellulolyticum) protein is Aspartate--ammonia ligase.